The chain runs to 20 residues: Toxin b subunit beta (20 aa).

As to quaternary structure, toxin b is a heterodimer composed of toxin alpha and toxin beta. As to expression, expressed by the venom gland.

Its subcellular location is the secreted. Binds to sodium channels (Nav) and affects the channel activation process. The protein is Toxin b subunit beta of Androctonus crassicauda (Arabian fat-tailed scorpion).